A 420-amino-acid chain; its full sequence is Threonine aspartase 1 (420 aa).

The tract at residues 1–25 is disordered; that stretch reads MIMEKGMNSGEGLPSRSSQASAAKV. Threonine 234 serves as the catalytic Nucleophile.

It belongs to the Ntn-hydrolase family. Intramolecular proteolysis generates 2 subunits, alpha and beta, which reassemble through a non-covalent association to form the fully active enzyme.

Protease responsible for KMT2A/MLL1 and KMT2D/MLL2 processing and activation. Through substrate activation, it controls the expression of HOXA genes, and the expression of key cell cycle regulators including CCNA1, CCNB1, CCNE1 and CDKN2A. In Mus musculus (Mouse), this protein is Threonine aspartase 1 (Tasp1).